The following is a 420-amino-acid chain: 2',3'-cyclic-nucleotide 3'-phosphodiesterase (420 aa).

A Phosphoserine modification is found at S9. Position 110 is a phosphotyrosine (Y110). S169, S227, and S239 each carry phosphoserine. Residue H250 is the Proton acceptor of the active site. T252 contributes to the substrate binding site. Residue T262 is modified to Phosphothreonine. H329 acts as the Proton donor in catalysis. T331 contacts substrate. Phosphoserine is present on S358. Cysteine methyl ester is present on C417. Residue C417 is the site of S-farnesyl cysteine attachment. Positions 418-420 (TII) are cleaved as a propeptide — removed in mature form.

This sequence belongs to the 2H phosphoesterase superfamily. CNPase family. As to quaternary structure, exists as monomers and homodimers.

It is found in the membrane. It localises to the melanosome. The catalysed reaction is a nucleoside 2',3'-cyclic phosphate + H2O = a nucleoside 2'-phosphate + H(+). Catalyzes the formation of 2'-nucleotide products from 2',3'-cyclic substrates. May participate in RNA metabolism in the myelinating cell, CNP is the third most abundant protein in central nervous system myelin. The polypeptide is 2',3'-cyclic-nucleotide 3'-phosphodiesterase (Rattus norvegicus (Rat)).